The sequence spans 178 residues: Cytochrome b6-f complex iron-sulfur subunit (178 aa).

A helical membrane pass occupies residues 20–42 (LLTFGTATGVALGALYPVANYFM). One can recognise a Rieske domain in the interval 65-161 (KTGWLATHQA…VDIEDDAVLV (97 aa)). Residues Cys-107, His-109, Cys-125, and His-128 each coordinate [2Fe-2S] cluster. Cys-112 and Cys-127 form a disulfide bridge.

Belongs to the Rieske iron-sulfur protein family. The 4 large subunits of the cytochrome b6-f complex are cytochrome b6, subunit IV (17 kDa polypeptide, PetD), cytochrome f and the Rieske protein, while the 4 small subunits are PetG, PetL, PetM and PetN. The complex functions as a dimer. Requires [2Fe-2S] cluster as cofactor.

It is found in the cellular thylakoid membrane. The catalysed reaction is 2 oxidized [plastocyanin] + a plastoquinol + 2 H(+)(in) = 2 reduced [plastocyanin] + a plastoquinone + 4 H(+)(out). Functionally, component of the cytochrome b6-f complex, which mediates electron transfer between photosystem II (PSII) and photosystem I (PSI), cyclic electron flow around PSI, and state transitions. This is Cytochrome b6-f complex iron-sulfur subunit from Prochlorococcus marinus (strain MIT 9215).